Here is a 785-residue protein sequence, read N- to C-terminus: LPS-assembly protein LptD (785 aa).

The signal sequence occupies residues 1 to 58 (MSCSCLCMSLYRGADRIGRFYTAHCPQDMALCMHRQKLNPLALALAAAFALNAPAALA).

Belongs to the LptD family. Component of the lipopolysaccharide transport and assembly complex. Interacts with LptE and LptA.

The protein localises to the cell outer membrane. Functionally, together with LptE, is involved in the assembly of lipopolysaccharide (LPS) at the surface of the outer membrane. This Chromobacterium violaceum (strain ATCC 12472 / DSM 30191 / JCM 1249 / CCUG 213 / NBRC 12614 / NCIMB 9131 / NCTC 9757 / MK) protein is LPS-assembly protein LptD.